A 344-amino-acid chain; its full sequence is Heat-inducible transcription repressor HrcA (344 aa).

Belongs to the HrcA family.

Negative regulator of class I heat shock genes (grpE-dnaK-dnaJ and groELS operons). Prevents heat-shock induction of these operons. The sequence is that of Heat-inducible transcription repressor HrcA from Aster yellows witches'-broom phytoplasma (strain AYWB).